The following is a 237-amino-acid chain: Orotidine 5'-phosphate decarboxylase (237 aa).

Residues D11, K34, D61 to T70, T124, R186, Q195, G215, and R216 contribute to the substrate site. The Proton donor role is filled by K63.

The protein belongs to the OMP decarboxylase family. Type 1 subfamily. In terms of assembly, homodimer.

It catalyses the reaction orotidine 5'-phosphate + H(+) = UMP + CO2. Its pathway is pyrimidine metabolism; UMP biosynthesis via de novo pathway; UMP from orotate: step 2/2. In terms of biological role, catalyzes the decarboxylation of orotidine 5'-monophosphate (OMP) to uridine 5'-monophosphate (UMP). This Lactococcus lactis subsp. cremoris (strain MG1363) protein is Orotidine 5'-phosphate decarboxylase.